Reading from the N-terminus, the 567-residue chain is Type II secretion system protein E (567 aa).

Position 325–332 (325–332 (GPTGSGKT)) interacts with ATP.

It belongs to the GSP E family. In terms of assembly, forms homooligomers; most probably hexamers. Interacts with XpsL/GspL.

It is found in the cell inner membrane. It catalyses the reaction ATP + H2O + cellular proteinSide 1 = ADP + phosphate + cellular proteinSide 2.. Functionally, ATPase component of the type II secretion system required for the energy-dependent secretion of extracellular factors such as proteases and toxins from the periplasm. Acts as a molecular motor to provide the energy that is required for assembly of the pseudopilus and the extrusion of substrates generated in the cytoplasm. The sequence is that of Type II secretion system protein E (xpsE) from Xanthomonas campestris pv. campestris (strain ATCC 33913 / DSM 3586 / NCPPB 528 / LMG 568 / P 25).